The following is a 463-amino-acid chain: Glutamate--tRNA ligase (463 aa).

The 'HIGH' region signature appears at Pro-10 to Gly-20. The 'KMSKS' region signature appears at Lys-236–Arg-240. Lys-239 contributes to the ATP binding site.

This sequence belongs to the class-I aminoacyl-tRNA synthetase family. Glutamate--tRNA ligase type 1 subfamily. As to quaternary structure, monomer.

It localises to the cytoplasm. It carries out the reaction tRNA(Glu) + L-glutamate + ATP = L-glutamyl-tRNA(Glu) + AMP + diphosphate. In terms of biological role, catalyzes the attachment of glutamate to tRNA(Glu) in a two-step reaction: glutamate is first activated by ATP to form Glu-AMP and then transferred to the acceptor end of tRNA(Glu). The sequence is that of Glutamate--tRNA ligase from Nitratidesulfovibrio vulgaris (strain DP4) (Desulfovibrio vulgaris).